Reading from the N-terminus, the 855-residue chain is MQIEKVYEPQRFEPHWAQWWIDSNIFRANPESPGRVFSLVIPPPNVTGVLHIGHMLEHTEIDVSTRWHRMLGDNTLWLPGTDHAGIATQMVVARQLKEEGINYRDLGREKFEERVWQWKAQSGDTIKRQMVRLGASCDWSRERFTLDPGLSRAVREVFVSLYERGLLYRGEYMTNWCPSCNTAISDLEVAHADVAGHLWHIRYPVNGMPGRFVTVATTRPETMLGDTAIAVNAKDPRYQDLHGKTVQLPLMDREIPIILDDLADPQFGTGVVKVTPAHDPNDFEAGKRHNLAKIQVIDNNARMTAAAGPYAGLDRFDARKRVVSALEEIGALVKVEDYPLSLGKCDRCKTPVEPLISTQWFVKTKPLAEKAIAVVESGEIGFVPQNWTKTYYEWMYNIRDWCVSRQLWWGHRIPAWHCGECKEIIVAREAPKACPRCASENLTQDTDVLDTWFSSGLWPFSTLGWPDQTADLAKYYPTTLLITGFDILFFWVARMVMFGLEFMGEVPFKQVYIHGLVRDADRQKMSKTKGNVIDPLVVTEKYGTDAVRMALLQGAAPGTDIVLTEERMESSRAFANKIWNAARFLFMNADQSAAAPAEPTIEDRWIVSRLNAAAETANRAIEQYRYHELAQELWKFFWHEFCDWYLELKKVSATGWGNAVAAFETALRLLHPAMPFLTEELWQRLERKEGDPKSIALAQYPQYRAELADSEAEKEVAIIQEIVTLARTLRTESKLDPKQQLKGALYCRTASLAIAQRHADAIQKIARTTLEFKAEAPPKADVIRSTVEFDLVLDVPKVEEDPARKQKEREQLEKNIANSKRQLGDEVFLSKAPAKVVDSIRAKLVDYEAQLAKML.

A 'HIGH' region motif is present at residues 44-54; the sequence is PNVTGVLHIGH. Positions 524–528 match the 'KMSKS' region motif; the sequence is KMSKT. K527 is a binding site for ATP. Residues 797–827 are a coiled coil; that stretch reads KVEEDPARKQKEREQLEKNIANSKRQLGDEV.

This sequence belongs to the class-I aminoacyl-tRNA synthetase family. ValS type 1 subfamily. Monomer.

The protein resides in the cytoplasm. It carries out the reaction tRNA(Val) + L-valine + ATP = L-valyl-tRNA(Val) + AMP + diphosphate. In terms of biological role, catalyzes the attachment of valine to tRNA(Val). As ValRS can inadvertently accommodate and process structurally similar amino acids such as threonine, to avoid such errors, it has a 'posttransfer' editing activity that hydrolyzes mischarged Thr-tRNA(Val) in a tRNA-dependent manner. This Solibacter usitatus (strain Ellin6076) protein is Valine--tRNA ligase.